Here is a 343-residue protein sequence, read N- to C-terminus: Succinylglutamate desuccinylase (343 aa).

Residues H60, E63, and H157 each contribute to the Zn(2+) site. E221 is an active-site residue.

The protein belongs to the AspA/AstE family. Succinylglutamate desuccinylase subfamily. Requires Zn(2+) as cofactor.

It carries out the reaction N-succinyl-L-glutamate + H2O = L-glutamate + succinate. It participates in amino-acid degradation; L-arginine degradation via AST pathway; L-glutamate and succinate from L-arginine: step 5/5. Functionally, transforms N(2)-succinylglutamate into succinate and glutamate. This chain is Succinylglutamate desuccinylase, found in Idiomarina loihiensis (strain ATCC BAA-735 / DSM 15497 / L2-TR).